Consider the following 34-residue polypeptide: Delta-conotoxin AtVIA (34 aa).

Residues 1–4 (LSKK) constitute a propeptide that is removed on maturation. At glutamine 5 the chain carries Pyrrolidone carboxylic acid. 3 cysteine pairs are disulfide-bonded: cysteine 6-cysteine 23, cysteine 13-cysteine 27, and cysteine 22-cysteine 31.

Expressed by the venom duct.

Its subcellular location is the secreted. Functionally, probable toxin from a worm-hunter cone snail. Shows an excitatory activity on a majority of mouse lumbar dorsal root ganglion (DRG) neurons. Very probably inhibits the inactivation of voltage-gated sodium channels (Nav). The protein is Delta-conotoxin AtVIA of Conus ateralbus (Cone snail).